The following is a 239-amino-acid chain: Xyloglucan-specific endo-beta-1,4-glucanase A (239 aa).

Residues 1–14 (MKLLALSLASLASA) form the signal peptide. N172 is a glycosylation site (N-linked (GlcNAc...) asparagine).

The protein belongs to the glycosyl hydrolase 12 (cellulase H) family.

The protein localises to the secreted. The enzyme catalyses xyloglucan + H2O = xyloglucan oligosaccharides.. Catalyzes endohydrolysis of 1,4-beta-D-glucosidic linkages in xyloglucan with retention of the beta-configuration of the glycosyl residues. Specific for xyloglucan and does not hydrolyze other cell wall components. Active against tamarind xyloglucan. The chain is Xyloglucan-specific endo-beta-1,4-glucanase A (xgeA) from Emericella nidulans (strain FGSC A4 / ATCC 38163 / CBS 112.46 / NRRL 194 / M139) (Aspergillus nidulans).